Reading from the N-terminus, the 521-residue chain is Bifunctional purine biosynthesis protein PurH (521 aa).

The MGS-like domain occupies 1 to 145 (MIKQALISVS…KNHRDVTVVV (145 aa)).

Belongs to the PurH family.

It catalyses the reaction (6R)-10-formyltetrahydrofolate + 5-amino-1-(5-phospho-beta-D-ribosyl)imidazole-4-carboxamide = 5-formamido-1-(5-phospho-D-ribosyl)imidazole-4-carboxamide + (6S)-5,6,7,8-tetrahydrofolate. The catalysed reaction is IMP + H2O = 5-formamido-1-(5-phospho-D-ribosyl)imidazole-4-carboxamide. It functions in the pathway purine metabolism; IMP biosynthesis via de novo pathway; 5-formamido-1-(5-phospho-D-ribosyl)imidazole-4-carboxamide from 5-amino-1-(5-phospho-D-ribosyl)imidazole-4-carboxamide (10-formyl THF route): step 1/1. Its pathway is purine metabolism; IMP biosynthesis via de novo pathway; IMP from 5-formamido-1-(5-phospho-D-ribosyl)imidazole-4-carboxamide: step 1/1. This chain is Bifunctional purine biosynthesis protein PurH, found in Paraburkholderia phymatum (strain DSM 17167 / CIP 108236 / LMG 21445 / STM815) (Burkholderia phymatum).